Here is a 364-residue protein sequence, read N- to C-terminus: Spermidine/putrescine import ATP-binding protein PotA (364 aa).

Positions 5-235 (LSFKDVSKGF…PVNRFVADFI (231 aa)) constitute an ABC transporter domain. 37 to 44 (GPSGCGKT) provides a ligand contact to ATP.

This sequence belongs to the ABC transporter superfamily. Spermidine/putrescine importer (TC 3.A.1.11.1) family. In terms of assembly, the complex is composed of two ATP-binding proteins (PotA), two transmembrane proteins (PotB and PotC) and a solute-binding protein (PotD).

The protein localises to the cell membrane. The catalysed reaction is ATP + H2O + polyamine-[polyamine-binding protein]Side 1 = ADP + phosphate + polyamineSide 2 + [polyamine-binding protein]Side 1.. Part of the ABC transporter complex PotABCD involved in spermidine/putrescine import. Responsible for energy coupling to the transport system. The protein is Spermidine/putrescine import ATP-binding protein PotA of Staphylococcus epidermidis (strain ATCC 35984 / DSM 28319 / BCRC 17069 / CCUG 31568 / BM 3577 / RP62A).